The following is a 160-amino-acid chain: Large ribosomal subunit protein uL10 (160 aa).

It belongs to the universal ribosomal protein uL10 family. Part of the ribosomal stalk of the 50S ribosomal subunit. The N-terminus interacts with L11 and the large rRNA to form the base of the stalk. The C-terminus forms an elongated spine to which L12 dimers bind in a sequential fashion forming a multimeric L10(L12)X complex.

Functionally, forms part of the ribosomal stalk, playing a central role in the interaction of the ribosome with GTP-bound translation factors. The sequence is that of Large ribosomal subunit protein uL10 from Wolinella succinogenes (strain ATCC 29543 / DSM 1740 / CCUG 13145 / JCM 31913 / LMG 7466 / NCTC 11488 / FDC 602W) (Vibrio succinogenes).